The primary structure comprises 199 residues: Holliday junction resolvase RecU (199 aa).

Residues Thr82, Asp84, Glu97, and Gln116 each coordinate Mg(2+).

The protein belongs to the RecU family. Mg(2+) is required as a cofactor.

Its subcellular location is the cytoplasm. The catalysed reaction is Endonucleolytic cleavage at a junction such as a reciprocal single-stranded crossover between two homologous DNA duplexes (Holliday junction).. In terms of biological role, endonuclease that resolves Holliday junction intermediates in genetic recombination. Cleaves mobile four-strand junctions by introducing symmetrical nicks in paired strands. Promotes annealing of linear ssDNA with homologous dsDNA. Required for DNA repair, homologous recombination and chromosome segregation. The sequence is that of Holliday junction resolvase RecU from Streptococcus agalactiae serotype Ia (strain ATCC 27591 / A909 / CDC SS700).